The primary structure comprises 233 residues: Uracil-DNA glycosylase (233 aa).

The Proton acceptor role is filled by D70.

The protein belongs to the uracil-DNA glycosylase (UDG) superfamily. UNG family.

It localises to the cytoplasm. The catalysed reaction is Hydrolyzes single-stranded DNA or mismatched double-stranded DNA and polynucleotides, releasing free uracil.. In terms of biological role, excises uracil residues from the DNA which can arise as a result of misincorporation of dUMP residues by DNA polymerase or due to deamination of cytosine. The polypeptide is Uracil-DNA glycosylase (Helicobacter acinonychis (strain Sheeba)).